Here is a 964-residue protein sequence, read N- to C-terminus: Fanconi-associated nuclease 1 homolog (964 aa).

Residues 31–56 (SRSLQDDAADAEREAAAGGSSSGGGD) are disordered. The UBZ4-type zinc finger occupies 63–92 (WVACPVCGESIRGTDYCVNTHLDICLTRGT). Zn(2+) contacts are provided by Cys66, Cys69, His83, and Cys87. The Mn(2+) site is built by Glu786, Asp907, Glu926, and Val927. One can recognise a VRR-NUC domain in the interval 844 to 958 (GIAEEILISS…GFDVEVCKVS (115 aa)).

It belongs to the FAN1 family. It depends on Mn(2+) as a cofactor. Requires Mg(2+) as cofactor.

It carries out the reaction Hydrolytically removes 5'-nucleotides successively from the 3'-hydroxy termini of 3'-hydroxy-terminated oligonucleotides.. In terms of biological role, nuclease required for the repair of DNA interstrand cross-links (ICL). Acts as a 5'-3' exonuclease that anchors at a cut end of DNA and cleaves DNA successively at every third nucleotide, allowing to excise an ICL from one strand through flanking incisions. The chain is Fanconi-associated nuclease 1 homolog from Oryza sativa subsp. japonica (Rice).